The chain runs to 148 residues: Hemoglobin subunit alpha (148 aa).

At Ser1 the chain carries N-acetylserine. The Globin domain maps to 8–148 (DYSAADRAEL…VCHELSSRYR (141 aa)). An O2-binding site is contributed by His66. Residue His95 participates in heme b binding.

The protein belongs to the globin family. In terms of assembly, heterotetramer of two alpha chains and two beta chains. As to expression, red blood cells.

Functionally, involved in oxygen transport from the lung to the various peripheral tissues. The protein is Hemoglobin subunit alpha (HBA) of Heterodontus portusjacksoni (Port Jackson shark).